Here is a 213-residue protein sequence, read N- to C-terminus: Gas vesicle protein F1 (213 aa).

The protein belongs to the gas vesicle GvpF/GvpL family. Binds GvpA1 in early growth stages; is the only one of GvpF1 to GvpM1 that interacts with GvpA1 in H.volcanii experiments. GvpF to GvpM interact with each other in vitro, and may form multi-subunit complex(es). Interacts with GvpC1 and GvpO1.

It localises to the gas vesicle. It is found in the cytoplasm. Functionally, might be involved in preventing aggregation of GvpA1. Proteins GvpF to GvpM might be involved in nucleating gas vesicle formation. A minor component of the gas vesicle, also found in soluble extracts. Gas vesicles are hollow, gas filled proteinaceous nanostructures found in several microbial planktonic microorganisms. They allow positioning of halobacteria at the optimal depth for growth in the poorly aerated, shallow brine pools of their habitat. Expression of a 9.5 kb p-vac DNA fragment containing 2 divergently transcribed regions (gvpD-gvpE-gvpF-gvpG-gvpH-gvpI-gvpJ-gvpK-gvpL-gvpM and gvpA-gvpC-gvpN-gvpO) allows H.volcanii to produce gas vesicles. A minimal gas vesicle can be made in H.volcanii by gvpA1-gvpO1 plus gvpF1-gvpG1-gvpJ1-gvpK1-gvpL1-gvpM1; lack of enough GvpJ1 prevents formation. The same region restores gas vesicle production in H.halobium without the p-vac locus. The polypeptide is Gas vesicle protein F1 (gvpF11) (Halobacterium salinarum (strain ATCC 700922 / JCM 11081 / NRC-1) (Halobacterium halobium)).